Reading from the N-terminus, the 37-residue chain is Large ribosomal subunit protein bL36 (37 aa).

This sequence belongs to the bacterial ribosomal protein bL36 family.

In Syntrophomonas wolfei subsp. wolfei (strain DSM 2245B / Goettingen), this protein is Large ribosomal subunit protein bL36.